The sequence spans 168 residues: Peptide deformylase (168 aa).

Fe cation is bound by residues Cys-92 and His-134. Glu-135 is a catalytic residue. His-138 provides a ligand contact to Fe cation.

This sequence belongs to the polypeptide deformylase family. It depends on Fe(2+) as a cofactor.

It carries out the reaction N-terminal N-formyl-L-methionyl-[peptide] + H2O = N-terminal L-methionyl-[peptide] + formate. Its function is as follows. Removes the formyl group from the N-terminal Met of newly synthesized proteins. Requires at least a dipeptide for an efficient rate of reaction. N-terminal L-methionine is a prerequisite for activity but the enzyme has broad specificity at other positions. This is Peptide deformylase from Teredinibacter turnerae (strain ATCC 39867 / T7901).